The sequence spans 206 residues: Large ribosomal subunit protein uL4 (206 aa).

The tract at residues 63–97 is disordered; that stretch reads MYKQKGTGRARHHSARAPQFRGGGKAHGPVVRSHE. A compositionally biased stretch (basic residues) spans 64–77; the sequence is YKQKGTGRARHHSA.

This sequence belongs to the universal ribosomal protein uL4 family. As to quaternary structure, part of the 50S ribosomal subunit.

In terms of biological role, one of the primary rRNA binding proteins, this protein initially binds near the 5'-end of the 23S rRNA. It is important during the early stages of 50S assembly. It makes multiple contacts with different domains of the 23S rRNA in the assembled 50S subunit and ribosome. Forms part of the polypeptide exit tunnel. The polypeptide is Large ribosomal subunit protein uL4 (Rhizobium etli (strain CIAT 652)).